A 55-amino-acid chain; its full sequence is Neurotoxin B-IV (55 aa).

P10 is subject to Hydroxyproline. Intrachain disulfides connect C12–C52, C16–C48, C23–C41, and C26–C37.

Belongs to the worm B-toxin family.

It localises to the secreted. Functionally, this toxin increases the excitability of nerves by delaying the inactivation of the voltage-gated sodium channel (Nav). Only acts on some crustacean. Is more abundant, but 15-fold less toxic than neurotoxin B-II. This chain is Neurotoxin B-IV, found in Cerebratulus lacteus (Milky ribbon worm).